Consider the following 349-residue polypeptide: tRNA-specific 2-thiouridylase MnmA (349 aa).

Residues 6-13 (LLSGGVDS) and Met32 each bind ATP. Residue Cys103 is the Nucleophile of the active site. Cys103 and Cys195 form a disulfide bridge. Gly127 lines the ATP pocket. An interaction with tRNA region spans residues 145–147 (KDQ). Cys195 (cysteine persulfide intermediate) is an active-site residue.

The protein belongs to the MnmA/TRMU family.

It localises to the cytoplasm. It carries out the reaction S-sulfanyl-L-cysteinyl-[protein] + uridine(34) in tRNA + AH2 + ATP = 2-thiouridine(34) in tRNA + L-cysteinyl-[protein] + A + AMP + diphosphate + H(+). In terms of biological role, catalyzes the 2-thiolation of uridine at the wobble position (U34) of tRNA, leading to the formation of s(2)U34. The chain is tRNA-specific 2-thiouridylase MnmA from Pseudothermotoga lettingae (strain ATCC BAA-301 / DSM 14385 / NBRC 107922 / TMO) (Thermotoga lettingae).